The chain runs to 346 residues: Holliday junction branch migration complex subunit RuvB (346 aa).

Residues 2–183 form a large ATPase domain (RuvB-L) region; that stretch reads TDDRIIGAGA…FGIVQRLEFY (182 aa). Residues Ile22, Arg23, Gly64, Lys67, Thr68, Thr69, 130–132, Arg173, Tyr183, and Arg220 each bind ATP; that span reads EDF. Thr68 lines the Mg(2+) pocket. The interval 184–254 is small ATPAse domain (RuvB-S); it reads SVEELTRIVR…VAQAAMKMLK (71 aa). The segment at 257–346 is head domain (RuvB-H); sequence PEGFDELDRR…DLFAEVPDVG (90 aa). Residues Arg293, Arg312, and Arg317 each coordinate DNA.

Belongs to the RuvB family. As to quaternary structure, homohexamer. Forms an RuvA(8)-RuvB(12)-Holliday junction (HJ) complex. HJ DNA is sandwiched between 2 RuvA tetramers; dsDNA enters through RuvA and exits via RuvB. An RuvB hexamer assembles on each DNA strand where it exits the tetramer. Each RuvB hexamer is contacted by two RuvA subunits (via domain III) on 2 adjacent RuvB subunits; this complex drives branch migration. In the full resolvosome a probable DNA-RuvA(4)-RuvB(12)-RuvC(2) complex forms which resolves the HJ.

It is found in the cytoplasm. It carries out the reaction ATP + H2O = ADP + phosphate + H(+). Functionally, the RuvA-RuvB-RuvC complex processes Holliday junction (HJ) DNA during genetic recombination and DNA repair, while the RuvA-RuvB complex plays an important role in the rescue of blocked DNA replication forks via replication fork reversal (RFR). RuvA specifically binds to HJ cruciform DNA, conferring on it an open structure. The RuvB hexamer acts as an ATP-dependent pump, pulling dsDNA into and through the RuvAB complex. RuvB forms 2 homohexamers on either side of HJ DNA bound by 1 or 2 RuvA tetramers; 4 subunits per hexamer contact DNA at a time. Coordinated motions by a converter formed by DNA-disengaged RuvB subunits stimulates ATP hydrolysis and nucleotide exchange. Immobilization of the converter enables RuvB to convert the ATP-contained energy into a lever motion, pulling 2 nucleotides of DNA out of the RuvA tetramer per ATP hydrolyzed, thus driving DNA branch migration. The RuvB motors rotate together with the DNA substrate, which together with the progressing nucleotide cycle form the mechanistic basis for DNA recombination by continuous HJ branch migration. Branch migration allows RuvC to scan DNA until it finds its consensus sequence, where it cleaves and resolves cruciform DNA. This chain is Holliday junction branch migration complex subunit RuvB, found in Stenotrophomonas maltophilia (strain R551-3).